Consider the following 614-residue polypeptide: Acid phosphatase (614 aa).

Positions 1–22 are cleaved as a signal peptide; the sequence is MKGTAASALLVALSATAAQARP. The Fibronectin type-III domain maps to 80–176; sequence IPKGMHIHYQ…EVLSFKTSRP (97 aa). 13 N-linked (GlcNAc...) asparagine glycosylation sites follow: N110, N161, N242, N295, N333, N340, N352, N408, N429, N512, N523, N559, and N578. Positions 606 to 614 are excised as a propeptide; sequence VAGGKKLHS.

In terms of assembly, monomer. Cu cation is required as a cofactor. Post-translationally, glycosylated; probably with N-linked high-mannose oligosaccharides.

Its subcellular location is the secreted. The enzyme catalyses a phosphate monoester + H2O = an alcohol + phosphate. Competitively inhibited by phosphomycin and inorganic orthophosphate. This is Acid phosphatase (aphA) from Aspergillus ficuum.